We begin with the raw amino-acid sequence, 557 residues long: Leucine-rich glioma-inactivated protein 1 (557 aa).

Residues 1–34 (MESESSRRMGNACIPLKRIAYFLCLFSVVLLTEG) form the signal peptide. Positions 35–72 (KKPAKPKCPAVCTCSKDNALCENARSIPRTVPPDVISL) constitute an LRRNT domain. 3 LRR repeats span residues 92–113 (SLQL…AFIG), 116–137 (HLEY…TFRG), and 140–161 (SLIH…IFKG). An LRRCT domain is found at 173-223 (NAFNCDCKLKWLVEWLGHTNATVEDIYCEGPPEYKKRKINSLSPKDFDCII). Residue N192 is glycosylated (N-linked (GlcNAc...) asparagine). EAR repeat units lie at residues 225 to 267 (EFAK…EWDH), 271 to 313 (TFRN…KRDG), 317 to 364 (KFIK…KWNG), 366 to 415 (GFYS…QWSK), 419 to 462 (LFTN…KWGG), 464 to 506 (SFQD…NWDA), and 510 to 552 (KFVK…KHVI). N277 is a glycosylation site (N-linked (GlcNAc...) asparagine). An N-linked (GlcNAc...) asparagine glycan is attached at N422.

Oligomer. Interacts with KCNA1 within a complex containing KCNA1, KCNA4 and KCNAB1. Part of a complex containing ADAM22, DLG4/PSD95 and CACNG2 (stargazin). Can bind to ADAM11 and ADAM23. Glycosylated. As to expression, expressed in the brain (at protein level). Expressed in cerebellar cortex basket cell terminals (at protein level). Highly expressed in the dentate gyrus and CA3 field of the hippocampus.

It localises to the secreted. Its subcellular location is the synapse. The protein localises to the cytoplasm. It is found in the golgi apparatus. The protein resides in the endoplasmic reticulum. Functionally, regulates voltage-gated potassium channels assembled from KCNA1, KCNA4 and KCNAB1. It slows down channel inactivation by precluding channel closure mediated by the KCNAB1 subunit. Ligand for ADAM22 that positively regulates synaptic transmission mediated by AMPA-type glutamate receptors. Plays a role in suppressing the production of MMP1/3 through the phosphatidylinositol 3-kinase/ERK pathway. The polypeptide is Leucine-rich glioma-inactivated protein 1 (Mus musculus (Mouse)).